The sequence spans 108 residues: CDGSH iron-sulfur domain-containing protein 1 (108 aa).

The chain crosses the membrane as a helical; Signal-anchor for type III membrane protein span at residues 14–31 (IAAVTFAAGTAALGYLAY). Residues 32–108 (KKFYAKENRT…GPLIIKKKET (77 aa)) lie on the Cytoplasmic side of the membrane. Residue Lys42 forms a Glycyl lysine isopeptide (Lys-Gly) (interchain with G-Cter in ubiquitin) linkage. Catalysis depends on Lys55, which acts as the Schiff-base intermediate with pyridoxal 5'-phosphate. 2 positions are modified to N6-acetyllysine; alternate: Lys55 and Lys68. Residues Lys55 and Lys68 each participate in a glycyl lysine isopeptide (Lys-Gly) (interchain with G-Cter in ubiquitin); alternate cross-link. [2Fe-2S] cluster contacts are provided by Cys72 and Cys74. Glycyl lysine isopeptide (Lys-Gly) (interchain with G-Cter in ubiquitin) cross-links involve residues Lys78 and Lys79. [2Fe-2S] cluster is bound by residues Cys83 and His87. A Glycyl lysine isopeptide (Lys-Gly) (interchain with G-Cter in ubiquitin) cross-link involves residue Lys89. Lys104 carries the N6-acetyllysine; alternate modification. Lys104 participates in a covalent cross-link: Glycyl lysine isopeptide (Lys-Gly) (interchain with G-Cter in ubiquitin); alternate. Residues Lys105 and Lys106 each participate in a glycyl lysine isopeptide (Lys-Gly) (interchain with G-Cter in ubiquitin) cross-link.

The protein belongs to the CISD protein family. As to quaternary structure, homodimer. [2Fe-2S] cluster is required as a cofactor. It depends on pyridoxal 5'-phosphate as a cofactor. Ubiquitinated by PRKN during mitophagy, leading to its degradation and enhancement of mitophagy. Deubiquitinated by USP30. As to expression, liver, adipose, skeletal muscle and heart (at protein level). Widely expressed. Expressed at the highest levels in the heart.

The protein localises to the mitochondrion outer membrane. It carries out the reaction L-cysteine + 2-oxoglutarate = 2-oxo-3-sulfanylpropanoate + L-glutamate. Its function is as follows. L-cysteine transaminase that catalyzes the reversible transfer of the amino group from L-cysteine to the alpha-keto acid 2-oxoglutarate to respectively form 2-oxo-3-sulfanylpropanoate and L-glutamate. The catalytic cycle occurs in the presence of pyridoxal 5'-phosphate (PLP) cofactor that facilitates transamination by initially forming an internal aldimine with the epsilon-amino group of active site Lys-55 residue on the enzyme (PLP-enzyme aldimine), subsequently displaced by formation of an external aldimine with the substrate amino group (PLP-L-cysteine aldimine). The external aldimine is further deprotonated to form a carbanion intermediate, which in the presence of 2-oxoglutarate regenerates PLP yielding final products 2-oxo-3-sulfanylpropanoate and L-glutamate. The proton transfer in carbanion intermediate is suggested to be controlled by the active site lysine residue, whereas PLP stabilizes carbanion structure through electron delocalization, also known as the electron sink effect. Plays a key role in regulating maximal capacity for electron transport and oxidative phosphorylation. May be involved in iron-sulfur cluster shuttling and/or in redox reactions. Can transfer the [2Fe-2S] cluster to an apo-acceptor protein only when in the oxidation state, likely serving as a redox sensor that regulates mitochondrial iron-sulfur cluster assembly and iron trafficking upon oxidative stress. This chain is CDGSH iron-sulfur domain-containing protein 1 (Cisd1), found in Mus musculus (Mouse).